We begin with the raw amino-acid sequence, 176 residues long: RING-H2 finger protein ATL73 (176 aa).

An N-terminal signal peptide occupies residues 1 to 16 (MARFLLATQATPTISA). Residues 42-62 (VIILAALLCALICALGINSVL) traverse the membrane as a helical segment. The RING-type; atypical zinc finger occupies 113–155 (CLICLGDFVEGETVRVLPKCNHGFHVKCIDTWLLSHSSCPTCR).

Belongs to the RING-type zinc finger family. ATL subfamily.

The protein resides in the membrane. The enzyme catalyses S-ubiquitinyl-[E2 ubiquitin-conjugating enzyme]-L-cysteine + [acceptor protein]-L-lysine = [E2 ubiquitin-conjugating enzyme]-L-cysteine + N(6)-ubiquitinyl-[acceptor protein]-L-lysine.. It functions in the pathway protein modification; protein ubiquitination. The chain is RING-H2 finger protein ATL73 (ATL73) from Arabidopsis thaliana (Mouse-ear cress).